An 891-amino-acid polypeptide reads, in one-letter code: DNA mismatch repair protein MutS (891 aa).

634 to 641 (GPNMGGKS) is an ATP binding site.

The protein belongs to the DNA mismatch repair MutS family.

In terms of biological role, this protein is involved in the repair of mismatches in DNA. It is possible that it carries out the mismatch recognition step. This protein has a weak ATPase activity. This Burkholderia mallei (strain NCTC 10247) protein is DNA mismatch repair protein MutS.